We begin with the raw amino-acid sequence, 379 residues long: MKFFDREREINEILHILNREPDDIYFIYGPLNSGKTALIKHIIENKLSDDYKVFYINFRTYLISEKREFIEAIFTTKKDDFFEKIKDKDEVLNLITKGVRILTGIPIPEVEFDKLFEEKINDAFQYLNSLLLEVKKSGKKPILIFDELQMIKDVVLNTENQRFSAFPSLRFGNGQKYLLKELFQFLVSLTKEQHLCHVFCLSSDSLFIEYVYSTGELEGRAKYLLVDDFDKETALKFMDFLAVENNINLTNEDKELIYSYVGGKPKDIKYVVEESKFKDLREILEFMLKDAVQKLDMFLDMLNYSKPKVDVGDEVIEIKKDNVIEALKLFKDEYEVSKKHIPVPVYTYLIKRNILFLNPIEGILKPQSYLVWNAIKRLL.

29–36 (GPLNSGKT) contacts ATP.

It belongs to the archaeal ATPase family.

This is an uncharacterized protein from Methanocaldococcus jannaschii (strain ATCC 43067 / DSM 2661 / JAL-1 / JCM 10045 / NBRC 100440) (Methanococcus jannaschii).